We begin with the raw amino-acid sequence, 873 residues long: Leucine--tRNA ligase (873 aa).

The 'HIGH' region signature appears at 48–58; the sequence is PYPSGKLHMGH. A 'KMSKS' region motif is present at residues 636–640; sequence KMSKS. Residue Lys-639 participates in ATP binding.

This sequence belongs to the class-I aminoacyl-tRNA synthetase family.

The protein resides in the cytoplasm. It catalyses the reaction tRNA(Leu) + L-leucine + ATP = L-leucyl-tRNA(Leu) + AMP + diphosphate. This Cupriavidus metallidurans (strain ATCC 43123 / DSM 2839 / NBRC 102507 / CH34) (Ralstonia metallidurans) protein is Leucine--tRNA ligase.